A 226-amino-acid chain; its full sequence is Large ribosomal subunit protein uL4 (226 aa).

The tract at residues 47 to 74 is disordered; the sequence is GTAKAKTRSEVSGGGRKPWPQKHTGRAR.

The protein belongs to the universal ribosomal protein uL4 family. In terms of assembly, part of the 50S ribosomal subunit.

Its function is as follows. One of the primary rRNA binding proteins, this protein initially binds near the 5'-end of the 23S rRNA. It is important during the early stages of 50S assembly. It makes multiple contacts with different domains of the 23S rRNA in the assembled 50S subunit and ribosome. Functionally, forms part of the polypeptide exit tunnel. The protein is Large ribosomal subunit protein uL4 of Kosmotoga olearia (strain ATCC BAA-1733 / DSM 21960 / TBF 19.5.1).